The following is a 323-amino-acid chain: Extracellular endo-alpha-(1-&gt;5)-L-arabinanase 1 (323 aa).

Positions 1 to 32 (MKKKKTWKRFLHFSSAALAAGLIFTSAAPAEA) are cleaved as a signal peptide. Catalysis depends on Asp-44, which acts as the Proton acceptor. Asp-44 is a binding site for substrate. Asp-107 is a Ca(2+) binding site. Substrate is bound by residues Gly-125 and 160–163 (NAID). Glu-165 serves as a coordination point for Ca(2+). 180-182 (SFW) serves as a coordination point for substrate. Glu-215 serves as the catalytic Proton donor. Residue Asp-287 coordinates Ca(2+).

The protein belongs to the glycosyl hydrolase 43 family. Ca(2+) is required as a cofactor.

It localises to the secreted. It carries out the reaction Endohydrolysis of (1-&gt;5)-alpha-arabinofuranosidic linkages in (1-&gt;5)-arabinans.. It participates in glycan metabolism; L-arabinan degradation. Its function is as follows. Involved in the degradation of arabinan and is a key enzyme in the complete degradation of the plant cell wall. Catalyzes the internal cleavage of alpha-(1-&gt;5)-L-arabinofuranosyl residues of linear 1,5-alpha-L-arabinan and of branched sugar beet arabinan. It displays no activity against heavily substituted arabinans or a range of other polysaccharides (larch wood arabinogalactan, wheat arabinoxylan and p-nitrophenyl-alpha-L-arabinofuranoside). The enzyme activity is progressively reduced as alpha-(1-&gt;5)-chains become shorter or more highly substituted. This Bacillus subtilis (strain 168) protein is Extracellular endo-alpha-(1-&gt;5)-L-arabinanase 1 (abnA).